The following is a 235-amino-acid chain: Thiamine import ATP-binding protein ThiQ (235 aa).

The ABC transporter domain occupies 2–230 (LKLENLTYRY…TVPEAAILGM (229 aa)). Position 32 to 39 (32 to 39 (GPSGAGKS)) interacts with ATP.

The protein belongs to the ABC transporter superfamily. Thiamine importer (TC 3.A.1.19.1) family. In terms of assembly, the complex is composed of two ATP-binding proteins (ThiQ), two transmembrane proteins (ThiP) and a solute-binding protein (ThiB).

The protein localises to the cell inner membrane. The catalysed reaction is thiamine(out) + ATP + H2O = thiamine(in) + ADP + phosphate + H(+). Its function is as follows. Part of the ABC transporter complex ThiBPQ involved in thiamine import. Responsible for energy coupling to the transport system. This Photorhabdus laumondii subsp. laumondii (strain DSM 15139 / CIP 105565 / TT01) (Photorhabdus luminescens subsp. laumondii) protein is Thiamine import ATP-binding protein ThiQ.